The following is a 599-amino-acid chain: uncharacterized protein (599 aa).

49-56 (GPPGSGKT) is an ATP binding site. The Macro domain occupies 416 to 599 (AEVRKELEYK…TKIFEEKFSV (184 aa)).

This sequence in the N-terminal section; belongs to the AAA ATPase family. RarA/MGS1/WRNIP1 subfamily.

This is an uncharacterized protein from Thermotoga maritima (strain ATCC 43589 / DSM 3109 / JCM 10099 / NBRC 100826 / MSB8).